Reading from the N-terminus, the 1851-residue chain is Voltage-dependent calcium channel type A subunit alpha-1 (1851 aa).

Over 1 to 38 (MGGPKKEENPPGGGPTSLFILTEDNPIRKYTRFIIEWP) the chain is Cytoplasmic. An I repeat occupies 25–316 (NPIRKYTRFI…LVLGVLSGEF (292 aa)). The helical transmembrane segment at 39-57 (PFEYAVLLTIIANCVVLAL) threads the bilayer. Over 58-75 (EEHLPGGDKTVLAQKLEK) the chain is Extracellular. A helical membrane pass occupies residues 76–95 (TEAYFLCIFCVEASLKILAL). Residues 96–107 (GLVLHKHSYLRN) are Cytoplasmic-facing. Residues 108-128 (IWNIMDFFVVVTGFMTQYPQI) form a helical membrane-spanning segment. Topologically, residues 129–133 (GPEVD) are extracellular. Residues 134–152 (LRTLRAIRVLRPLKLVSGI) traverse the membrane as a helical segment. Residues 153–171 (PSLQVVLKSIIKAMAPLLQ) lie on the Cytoplasmic side of the membrane. Residues 172 to 191 (IGLLVLFAIVIFAIIGLEFY) form a helical membrane-spanning segment. At 192-288 (SGALHKTCYS…WTNDALGSAF (97 aa)) the chain is on the extracellular side. Residues N234 and N235 are each glycosylated (N-linked (GlcNAc...) asparagine). A helical membrane pass occupies residues 289–313 (NWIYFVPLIVIGSFFMLNLVLGVLS). Residues 314–441 (GEFSNERNRV…FWIRHTVKTQ (128 aa)) lie on the Cytoplasmic side of the membrane. Positions 381–417 (RKKLKSLGKSKSTDTEEEEAEEDYGDDGYLKTRSKPQ) are disordered. Residues 395-406 (TEEEEAEEDYGD) show a composition bias toward acidic residues. An II repeat occupies 427–670 (EKRFRFWIRH…VFLAIAVDNL (244 aa)). The helical transmembrane segment at 442–460 (WFYWFVIVLVFLNTVCVAV) threads the bilayer. Residues 461–475 (EHYGQPSFLTEFLYY) lie on the Extracellular side of the membrane. Residues 476-495 (AEFIFLGLFMSEMFIKMYAL) form a helical membrane-spanning segment. At 496-503 (GPRIYFES) the chain is on the cytoplasmic side. The chain crosses the membrane as a helical span at residues 504-522 (SFNRFDCVVISGSIFEVIW). The Extracellular portion of the chain corresponds to 523 to 531 (SEVKGGSFG). A helical transmembrane segment spans residues 532 to 550 (LSVLRALRLLRIFKVTKYW). Residues 551-569 (SSLRNLVISLLNSMRSIIS) lie on the Cytoplasmic side of the membrane. Residues 570 to 589 (LLFLLFLFILIFALLGMQLF) traverse the membrane as a helical segment. At 590–642 (GGQFNLPGGTPETNFNTFPIALLTVFQILTGEDWNEVMYQGIISQGGAQKGMI) the chain is on the extracellular side. Residues 643-667 (YSIYFIVLVLFGNYTLLNVFLAIAV) form a helical membrane-spanning segment. At 668–767 (DNLANAQELT…IRRGAHWVVN (100 aa)) the chain is on the cytoplasmic side. The interval 710-741 (ENGDGAVAPSKSKGKKKEEEKKEEEEVTEGPK) is disordered. The III repeat unit spans residues 762–1049 (AHWVVNLPYF…IITFQEQGEA (288 aa)). Residues 768–786 (LPYFDFFIMVVISMSSIAL) traverse the membrane as a helical segment. The Extracellular segment spans residues 787 to 802 (AAEDPVRENSRRNKIL). A helical transmembrane segment spans residues 803-822 (NYFDYAFTGVFTIEMLLKIV). Residues 823 to 834 (DLGVILHPGSYL) lie on the Cytoplasmic side of the membrane. The chain crosses the membrane as a helical span at residues 835–853 (REFWNIMDAVVVICAAVSF). Over 854–866 (GFDMSGSSAGQNL) the chain is Extracellular. N865 carries an N-linked (GlcNAc...) asparagine glycan. The helical transmembrane segment at 867–885 (STIKSLRVLRVLRPLKTIK) threads the bilayer. The Cytoplasmic segment spans residues 886 to 904 (RVPKLKAVFDCVVNSLKNV). Residues 905–924 (VNILIVYILFQFIFSVIGVQ) traverse the membrane as a helical segment. Topologically, residues 925 to 1013 (LFNGKFFYCT…EDRGPIQNFR (89 aa)) are extracellular. A helical transmembrane segment spans residues 1014–1038 (IEMSIFYIVYFIVFPFFFVNIFVAL). Residues 1039-1093 (IIITFQEQGEAELQDGEIDKNQKSCIDFTIGARPLERYMPKNRNTFKYKVWRIVV) are Cytoplasmic-facing. One copy of the IV repeat lies at 1086–1347 (YKVWRIVVST…DNFDYLTRDS (262 aa)). A helical membrane pass occupies residues 1094–1122 (STPFEYFIMMLIVFNTLLLMMKYHNQGDM). Topologically, residues 1123 to 1127 (YEKSL) are extracellular. Residues 1128-1147 (KYINMGFTGMFSVETVLKII) traverse the membrane as a helical segment. The Cytoplasmic portion of the chain corresponds to 1148 to 1155 (GFGVKNFF). Residues 1156–1174 (KDPWNIFDLITVLGSIVDA) form a helical membrane-spanning segment. The Extracellular segment spans residues 1175-1184 (LWMEFGHDDS). Residues 1185 to 1203 (NSINVGFLRLFRAARLIKL) traverse the membrane as a helical segment. Residues 1204-1222 (LRQGYTIRILLWTFVQSFK) lie on the Cytoplasmic side of the membrane. A helical transmembrane segment spans residues 1223–1242 (ALPYVCLLIAMLFFIYAIIG). Topologically, residues 1243 to 1308 (MQVFGNIKLG…DAEKAPGEYC (66 aa)) are extracellular. The interval 1306-1348 (EYCGSTLAYAYFVSFIFFCSFLMLNLFVAVIMDNFDYLTRDSS) is phenylalkylamine binding. The helical transmembrane segment at 1309 to 1333 (GSTLAYAYFVSFIFFCSFLMLNLFV) threads the bilayer. The Cytoplasmic portion of the chain corresponds to 1334–1851 (AVIMDNFDYL…HSDSDEEDWC (518 aa)). In terms of domain architecture, EF-hand spans 1353–1388 (HHLDEFVRIWAEYDPNATGKIHYTEMYDMLKNMDPP). D1366, N1368, T1370, K1372, and E1377 together coordinate Ca(2+). Disordered stretches follow at residues 1513–1572 (DASR…HHDI), 1588–1653 (TRHP…SPAR), 1685–1764 (RAGI…DRDR), and 1823–1851 (VLPSPVLNGFKPKSGLNPRHSDSDEEDWC). The segment covering 1589-1600 (RHPRHGNSHPRY) has biased composition (basic residues). The segment covering 1604–1619 (SWSASTSPARSPSPSR) has biased composition (low complexity). Composition is skewed to polar residues over residues 1637–1649 (YGTTSLCQRSRSP) and 1698–1710 (KPSTLQLKPTNIN). Positions 1734-1764 (HHRDLLRDPRDMYYSSRERERDRERLRDRDR) are enriched in basic and acidic residues.

This sequence belongs to the calcium channel alpha-1 subunit (TC 1.A.1.11) family. In terms of tissue distribution, expressed widely in the embryonic nervous system.

It localises to the membrane. Functionally, voltage-sensitive calcium channels (VSCC) mediate the entry of calcium ions into excitable cells and are also involved in a variety of calcium-dependent processes, including muscle contraction, neurotransmitter release, gene expression, cell motility, cell division and cell death. Probably encodes a dihydropyridine-insensitive current. Vital for survival to adulthood. The sequence is that of Voltage-dependent calcium channel type A subunit alpha-1 (cac) from Drosophila melanogaster (Fruit fly).